Here is a 351-residue protein sequence, read N- to C-terminus: Histidinol-phosphate aminotransferase 1 (351 aa).

At Lys-210 the chain carries N6-(pyridoxal phosphate)lysine.

Belongs to the class-II pyridoxal-phosphate-dependent aminotransferase family. Histidinol-phosphate aminotransferase subfamily. In terms of assembly, homodimer. It depends on pyridoxal 5'-phosphate as a cofactor.

It catalyses the reaction L-histidinol phosphate + 2-oxoglutarate = 3-(imidazol-4-yl)-2-oxopropyl phosphate + L-glutamate. It functions in the pathway amino-acid biosynthesis; L-histidine biosynthesis; L-histidine from 5-phospho-alpha-D-ribose 1-diphosphate: step 7/9. This Pseudomonas aeruginosa (strain ATCC 15692 / DSM 22644 / CIP 104116 / JCM 14847 / LMG 12228 / 1C / PRS 101 / PAO1) protein is Histidinol-phosphate aminotransferase 1 (hisC1).